A 585-amino-acid polypeptide reads, in one-letter code: A-type ATP synthase subunit A (585 aa).

231-238 (GPFGSGKT) is a binding site for ATP.

The protein belongs to the ATPase alpha/beta chains family. In terms of assembly, has multiple subunits with at least A(3), B(3), C, D, E, F, H, I and proteolipid K(x).

It is found in the cell membrane. The enzyme catalyses ATP + H2O + 4 H(+)(in) = ADP + phosphate + 5 H(+)(out). Functionally, component of the A-type ATP synthase that produces ATP from ADP in the presence of a proton gradient across the membrane. The A chain is the catalytic subunit. The chain is A-type ATP synthase subunit A from Thermococcus gammatolerans (strain DSM 15229 / JCM 11827 / EJ3).